The following is a 79-amino-acid chain: Hematopoietic cell signal transducer (79 aa).

Residues 1-18 form the signal peptide; it reads MVPPGNILFLLLLPVATA. At 19 to 35 the chain is on the extracellular side; the sequence is QMTPGSCSGCGPLSLPL. The chain crosses the membrane as a helical span at residues 36 to 56; it reads LAGLVAADAVVSLLIVVVVFV. Residues 57-79 lie on the Cytoplasmic side of the membrane; the sequence is CARLRSRPTQEDDKIYINMPGRG. Tyrosine 72 is subject to Phosphotyrosine. A GRB2 binding site region spans residues 72–74; it reads YIN. Residues 72 to 75 form a PIK3R1 binding site region; it reads YINM.

The protein belongs to the DAP10 family. As to quaternary structure, homodimer; Disulfide-linked. Heterohexamer composed of four subunits of HCST/DAP10 and two subunits of KLRK1. Interacts (via transmembrane domain) with KLRK1 (via transmembrane domain); the interaction is required for KLRK1 NK cell surface and induces NK cell-mediated cytotoxicity. Interacts with PIK3R1 and GRB2. Interacts with CLEC5A. Forms an CLEC5A/TYROBP/HCST trimolecular complex depending almost solely on TYROBP. Interacts with KLRK1. Interacts with CD300H. Post-translationally, phosphorylated; PIK3R1 and GRB2 associate specifically with tyrosine-phosphorylated HCST. O-glycosylated.

It localises to the membrane. Transmembrane adapter protein which associates with KLRK1 to form an activation receptor KLRK1-HCST in lymphoid and myeloid cells; this receptor plays a major role in triggering cytotoxicity against target cells expressing cell surface ligands such as MHC class I chain-related MICA and MICB, and UL16-binding proteins (ULBPs); these ligands are up-regulated by stress conditions and pathological state such as viral infection and tumor transformation. Functions as a docking site for PI3-kinase PIK3R1 and GRB2. Interaction of ULBPs with KLRK1-HCST triggers calcium mobilization and activation of the PIK3R1, MAP2K/ERK, and JAK2/STAT5 signaling pathways. Both PIK3R1 and GRB2 are required for full KLRK1-HCST-mediated activation and ultimate killing of target cells. In NK cells, KLRK1-HCST signaling directly induces cytotoxicity and enhances cytokine production initiated via DAP12/TYROBP-associated receptors. In T-cells, it provides primarily costimulation for TCR-induced signals. KLRK1-HCST receptor plays a role in immune surveillance against tumors and is required for cytolysis of tumors cells; indeed, melanoma cells that do not express KLRK1 ligands escape from immune surveillance mediated by NK cells. In Bos taurus (Bovine), this protein is Hematopoietic cell signal transducer (HCST).